We begin with the raw amino-acid sequence, 85 residues long: Toxin BmKITc (85 aa).

Positions 1–21 (MKLFLLLVIFASMLNDGLVNA) are cleaved as a signal peptide. Residues 22–82 (DGYIRGSDGC…KWKYESNTCG (61 aa)) form the LCN-type CS-alpha/beta domain. Intrachain disulfides connect cysteine 31–cysteine 81, cysteine 35–cysteine 56, cysteine 42–cysteine 63, and cysteine 46–cysteine 65.

It belongs to the long (4 C-C) scorpion toxin superfamily. Sodium channel inhibitor family. Beta subfamily. As to expression, expressed by the venom gland.

Its subcellular location is the secreted. Functionally, depressant insect beta-toxins cause a transient contraction paralysis followed by a slow flaccid paralysis. They bind voltage-independently at site-4 of sodium channels (Nav) and shift the voltage of activation toward more negative potentials thereby affecting sodium channel activation and promoting spontaneous and repetitive firing. The protein is Toxin BmKITc of Olivierus martensii (Manchurian scorpion).